Reading from the N-terminus, the 388-residue chain is GTPase Obg (388 aa).

One can recognise an Obg domain in the interval methionine 1–leucine 159. Residues alanine 160–glutamine 333 form the OBG-type G domain. GTP is bound by residues glycine 166 to serine 173, phenylalanine 191 to valine 195, aspartate 213 to glycine 216, asparagine 283 to aspartate 286, and serine 314 to tyrosine 316. 2 residues coordinate Mg(2+): serine 173 and threonine 193.

Belongs to the TRAFAC class OBG-HflX-like GTPase superfamily. OBG GTPase family. As to quaternary structure, monomer. Mg(2+) serves as cofactor.

It is found in the cytoplasm. Its function is as follows. An essential GTPase which binds GTP, GDP and possibly (p)ppGpp with moderate affinity, with high nucleotide exchange rates and a fairly low GTP hydrolysis rate. Plays a role in control of the cell cycle, stress response, ribosome biogenesis and in those bacteria that undergo differentiation, in morphogenesis control. This Shewanella oneidensis (strain ATCC 700550 / JCM 31522 / CIP 106686 / LMG 19005 / NCIMB 14063 / MR-1) protein is GTPase Obg.